The following is a 174-amino-acid chain: uncharacterized protein (174 aa).

Residues 7–24 form a helical membrane-spanning segment; that stretch reads LLLLAFAVCLAVGFSGCL.

It localises to the membrane. This is an uncharacterized protein from Methanocaldococcus jannaschii (strain ATCC 43067 / DSM 2661 / JAL-1 / JCM 10045 / NBRC 100440) (Methanococcus jannaschii).